A 422-amino-acid chain; its full sequence is Putative acid phosphatase 5 (422 aa).

An N-terminal signal peptide occupies residues 1 to 13; sequence MLLLLVLLIGASG. Catalysis depends on H40, which acts as the Nucleophile. 3 N-linked (GlcNAc...) asparagine glycosylation sites follow: N104, N210, and N218. 3 disulfides stabilise this stretch: C152/C363, C205/C302, and C338/C342. The active-site Proton donor is D279. N-linked (GlcNAc...) asparagine glycosylation is found at N312 and N323.

Belongs to the histidine acid phosphatase family.

The enzyme catalyses a phosphate monoester + H2O = an alcohol + phosphate. This chain is Putative acid phosphatase 5 (pho-5), found in Caenorhabditis elegans.